A 196-amino-acid polypeptide reads, in one-letter code: Molybdenum cofactor guanylyltransferase (196 aa).

Residues 10-12, K23, N51, D69, and D99 each bind GTP; that span reads LAG. Position 99 (D99) interacts with Mg(2+).

This sequence belongs to the MobA family. In terms of assembly, monomer. Requires Mg(2+) as cofactor.

The protein resides in the cytoplasm. The enzyme catalyses Mo-molybdopterin + GTP + H(+) = Mo-molybdopterin guanine dinucleotide + diphosphate. Its function is as follows. Transfers a GMP moiety from GTP to Mo-molybdopterin (Mo-MPT) cofactor (Moco or molybdenum cofactor) to form Mo-molybdopterin guanine dinucleotide (Mo-MGD) cofactor. The protein is Molybdenum cofactor guanylyltransferase of Shewanella baltica (strain OS155 / ATCC BAA-1091).